Here is a 160-residue protein sequence, read N- to C-terminus: MMAEKKKKELPRKVVADNRRARFDYDIGEVFEAGIALKGTEVKALRTGKATIHESYAGGKNGELWLFNSYVPEYLEANRFNHEPRRPRKLLMHKRQIHKLTVAVEREGMTVVPLKIYFNEQGRAKVEVALAKGRKAHDKREAVKERDWNRDKARLMRDRG.

The tract at residues 134-160 (RKAHDKREAVKERDWNRDKARLMRDRG) is disordered. The segment covering 138 to 160 (DKREAVKERDWNRDKARLMRDRG) has biased composition (basic and acidic residues).

Belongs to the SmpB family.

The protein resides in the cytoplasm. In terms of biological role, required for rescue of stalled ribosomes mediated by trans-translation. Binds to transfer-messenger RNA (tmRNA), required for stable association of tmRNA with ribosomes. tmRNA and SmpB together mimic tRNA shape, replacing the anticodon stem-loop with SmpB. tmRNA is encoded by the ssrA gene; the 2 termini fold to resemble tRNA(Ala) and it encodes a 'tag peptide', a short internal open reading frame. During trans-translation Ala-aminoacylated tmRNA acts like a tRNA, entering the A-site of stalled ribosomes, displacing the stalled mRNA. The ribosome then switches to translate the ORF on the tmRNA; the nascent peptide is terminated with the 'tag peptide' encoded by the tmRNA and targeted for degradation. The ribosome is freed to recommence translation, which seems to be the essential function of trans-translation. This is SsrA-binding protein from Azorhizobium caulinodans (strain ATCC 43989 / DSM 5975 / JCM 20966 / LMG 6465 / NBRC 14845 / NCIMB 13405 / ORS 571).